The primary structure comprises 535 residues: Glutamate--cysteine ligase (535 aa).

This sequence belongs to the glutamate--cysteine ligase type 1 family. Type 1 subfamily.

It carries out the reaction L-cysteine + L-glutamate + ATP = gamma-L-glutamyl-L-cysteine + ADP + phosphate + H(+). The protein operates within sulfur metabolism; glutathione biosynthesis; glutathione from L-cysteine and L-glutamate: step 1/2. The chain is Glutamate--cysteine ligase from Pseudomonas syringae pv. syringae (strain B728a).